Consider the following 255-residue polypeptide: 14-3-3-like protein GF14 psi (255 aa).

Serine 66 carries the phosphoserine modification. Threonine 162 carries the post-translational modification Phosphothreonine. A Phosphoserine modification is found at serine 189. 2 positions are modified to phosphothreonine: threonine 210 and threonine 238.

It belongs to the 14-3-3 family. Component of a DNA binding complex that binds to the G box. Interacts with IDH3, AGT3, GLN1-1, GLN1-2, GLN1-4, SAM1, SAM2, MDH1, METK3 and MDH2. Binds to 1-aminocyclopropane-1-carboxylate synthases (ACS) such as ACS2, ACS5, ACS6, ACS8, and ACS11. Interacts with FD. Interacts with DREB1A and DREB1B in the nucleus. Interacts with CINV1.

The protein resides in the cytoplasm. It is found in the nucleus. Functionally, is associated with a DNA binding complex that binds to the G box, a well-characterized cis-acting DNA regulatory element found in plant genes. Involved in the regulation of nutrient metabolism. Reciprocal negative transcription regulation of miR396. Negative regulator of constitutive freezing tolerance and cold acclimation by controlling cold-induced gene expression partially through an ethylene (ET)-dependent pathway; prevents ethylene (ET) biosynthesis, probably by binding 1-aminocyclopropane-1-carboxylate synthases (ACS) to reduce their stability, thus contributing to establish adequate ET levels under both standard and low-temperature conditions. In Arabidopsis thaliana (Mouse-ear cress), this protein is 14-3-3-like protein GF14 psi.